Reading from the N-terminus, the 443-residue chain is Proline--tRNA ligase (443 aa).

This sequence belongs to the class-II aminoacyl-tRNA synthetase family. ProS type 2 subfamily. Homodimer.

It is found in the cytoplasm. It catalyses the reaction tRNA(Pro) + L-proline + ATP = L-prolyl-tRNA(Pro) + AMP + diphosphate. Functionally, catalyzes the attachment of proline to tRNA(Pro) in a two-step reaction: proline is first activated by ATP to form Pro-AMP and then transferred to the acceptor end of tRNA(Pro). This Zymomonas mobilis subsp. mobilis (strain ATCC 10988 / DSM 424 / LMG 404 / NCIMB 8938 / NRRL B-806 / ZM1) protein is Proline--tRNA ligase.